We begin with the raw amino-acid sequence, 354 residues long: uncharacterized protein (354 aa).

An N-terminal signal peptide occupies residues 1-21; it reads MRYLLIVITFFMGFSSLPAWA.

This sequence to E.coli YbgO.

Its function is as follows. May be involved in a fimbrial system chaperoned by YqiH and exported by YqiG. This is an uncharacterized protein from Escherichia coli (strain K12).